A 397-amino-acid polypeptide reads, in one-letter code: Ribosomal RNA large subunit methyltransferase I (397 aa).

One can recognise a PUA domain in the interval Ser2–Arg81.

The protein belongs to the methyltransferase superfamily. RlmI family.

The protein localises to the cytoplasm. It catalyses the reaction cytidine(1962) in 23S rRNA + S-adenosyl-L-methionine = 5-methylcytidine(1962) in 23S rRNA + S-adenosyl-L-homocysteine + H(+). Specifically methylates the cytosine at position 1962 (m5C1962) of 23S rRNA. In Tolumonas auensis (strain DSM 9187 / NBRC 110442 / TA 4), this protein is Ribosomal RNA large subunit methyltransferase I.